A 374-amino-acid chain; its full sequence is Protein STRICTOSIDINE SYNTHASE-LIKE 10 (374 aa).

The N-terminal stretch at 1–18 (MTMMIITVFLTVIAAVLA) is a signal peptide. The N-linked (GlcNAc...) asparagine glycan is linked to N50.

This sequence belongs to the strictosidine synthase family.

The protein resides in the vacuole. In Arabidopsis thaliana (Mouse-ear cress), this protein is Protein STRICTOSIDINE SYNTHASE-LIKE 10.